A 948-amino-acid polypeptide reads, in one-letter code: MADDIELNFAVPASGLVRQVAPKKGGRWTDRVRAKREARDAFKSMKANHLTVQNPSMPTVSASELVPKPAVIKPAPTSASVSRHPQPKSQVVAPPRFTNATAGPSRPAPSPQAASSNVPKSASIPAPATIKHRTSLPTNAFERPPLPPQAGPSRPHPAEKLKTPQFISSLFTSAPLPGVKSSVAPEISTGAPSNAPVDTTTFQGLGLNKLLINHLKGKMGVEKPTGIQRNCLPYMLSSPLNPDKKAGDEGPKEEPLRDVLIQAQTGSGKTLSYLLPIVQTLLPLSRLSYIDRSIGTLAIILAPTRELAQQISKVLEQLLHMSFAASKEGSDDEDEDDRPFTRWLVSGLLTGGSTRTHEKAKLRKGVPILVSTPGRLLDHLQNTMSFQCAKTMFLVLDEADRLMDLGFEETIQGIIKALEGRRRNEINIEKEMDKEGGGTMRWPFWDRGRLNVLCSATVDAKVERLAGAALRDPVLFRSEKDEAEAKKKAEGKDDAVIKALNEAQAIVIPQESEEKFTPPSQLSQKYVVLPTKLRLVALVALLRSLISSVAKGISVSNGTKVIVFLSSTDAVDFHWKLLGGVQMGQQGQQADGEKEEDEEEEGESVEERESDGESKAKKSKRKAKSKSTDDIVSLASPLFPNTTLHRLHGSLPLRTRLASLKAFATSSSQPSVLFATSVASRGLDLPLVRAVVQYDLPTEGGANEYVHRVGRTARAGKGGEAWAFVSPSEEGWVKWIEGKMGAAEGKSGVNLGQVGVEDVLRKGFGGKSYEYEARATDVQLSFENWVLASEQNAALARKAFASFVRAYSTHPLEEKQFFHTKLLHLGHLAKSFALREAPAQLASALSAGKSKRPKSKAASSATHPGKRKRDEDEDEMEERGGKELTARNETERRMYEAVRKQGRTIKSGGKLGEFSGKGQNKGQKAAATGGEFHIVNTGELERLVARRK.

Positions 43 to 160 (KSMKANHLTV…GPSRPHPAEK (118 aa)) are disordered. Polar residues-rich tracts occupy residues 50-62 (LTVQNPSMPTVSA) and 77-89 (TSASVSRHPQPKS). The Q motif signature appears at 200-229 (TTFQGLGLNKLLINHLKGKMGVEKPTGIQR). Residues 250-476 (GPKEEPLRDV…GAALRDPVLF (227 aa)) enclose the Helicase ATP-binding domain. 263 to 270 (AQTGSGKT) provides a ligand contact to ATP. Residues 397–400 (DEAD) carry the DEAD box motif. 2 disordered regions span residues 583–626 (MGQQ…AKSK) and 844–929 (ALSA…AATG). Residues 593–604 (EKEEDEEEEGES) show a composition bias toward acidic residues. One can recognise a Helicase C-terminal domain in the interval 597–757 (DEEEEGESVE…GVNLGQVGVE (161 aa)). Basic and acidic residues-rich tracts occupy residues 605-616 (VEERESDGESKA) and 878-899 (ERGGKELTARNETERRMYEAVR).

The protein belongs to the DEAD box helicase family. DDX31/DBP7 subfamily.

It is found in the nucleus. The protein localises to the nucleolus. The enzyme catalyses ATP + H2O = ADP + phosphate + H(+). In terms of biological role, ATP-binding RNA helicase involved in the biogenesis of 60S ribosomal subunits and is required for the normal formation of 25S and 5.8S rRNAs. In Cryptococcus neoformans var. neoformans serotype D (strain B-3501A) (Filobasidiella neoformans), this protein is ATP-dependent RNA helicase DBP7 (DBP7).